Consider the following 90-residue polypeptide: Small ribosomal subunit protein bS20 (90 aa).

Over residues 1 to 11 (MANIKSSEKDI) the composition is skewed to basic and acidic residues. 2 disordered regions span residues 1–29 (MANI…SRLR) and 69–90 (SKNA…SAAA).

The protein belongs to the bacterial ribosomal protein bS20 family.

Binds directly to 16S ribosomal RNA. The chain is Small ribosomal subunit protein bS20 from Leptospira borgpetersenii serovar Hardjo-bovis (strain L550).